A 360-amino-acid polypeptide reads, in one-letter code: Glyceraldehyde-3-phosphate dehydrogenase (360 aa).

NAD(+) contacts are provided by residues 13 to 14 (RI), Asp35, and Arg82. D-glyceraldehyde 3-phosphate is bound by residues 153–155 (SCT), Thr184, 213–214 (TG), and Arg236. The Nucleophile role is filled by Cys154. Asn318 provides a ligand contact to NAD(+).

This sequence belongs to the glyceraldehyde-3-phosphate dehydrogenase family. Homotetramer.

The catalysed reaction is D-glyceraldehyde 3-phosphate + phosphate + NAD(+) = (2R)-3-phospho-glyceroyl phosphate + NADH + H(+). It participates in carbohydrate degradation; glycolysis; pyruvate from D-glyceraldehyde 3-phosphate: step 1/5. In terms of biological role, key enzyme in glycolysis that catalyzes the first step of the pathway by converting D-glyceraldehyde 3-phosphate (G3P) into 3-phospho-D-glyceroyl phosphate. Essential for the maintenance of cellular ATP levels and carbohydrate metabolism. The sequence is that of Glyceraldehyde-3-phosphate dehydrogenase from Atriplex nummularia (Old man saltbush).